A 126-amino-acid polypeptide reads, in one-letter code: Follitropin subunit beta (126 aa).

The first 19 residues, 1–19 (MKLIQLCILFWCWRAICCQ), serve as a signal peptide directing secretion. 6 disulfides stabilise this stretch: cysteine 21–cysteine 69, cysteine 35–cysteine 84, cysteine 38–cysteine 122, cysteine 46–cysteine 100, cysteine 50–cysteine 102, and cysteine 105–cysteine 112. N-linked (GlcNAc...) asparagine glycosylation is found at asparagine 25 and asparagine 42.

Belongs to the glycoprotein hormones subunit beta family. In terms of assembly, heterodimer. The active follitropin is a heterodimer composed of an alpha chain/CGA shared with other hormones and a unique beta chain/FSHB shown here.

Its subcellular location is the secreted. Its function is as follows. Together with the alpha chain CGA constitutes follitropin, the follicle-stimulating hormone, and provides its biological specificity to the hormone heterodimer. Binds FSHR, a G protein-coupled receptor, on target cells to activate downstream signaling pathways. Follitropin is involved in follicle development and spermatogenesis in reproductive organs. The polypeptide is Follitropin subunit beta (FSHB) (Phodopus sungorus (Striped hairy-footed hamster)).